Here is a 310-residue protein sequence, read N- to C-terminus: tRNA-5-methyluridine(54) 2-sulfurtransferase (310 aa).

Residues cysteine 3, cysteine 6, cysteine 22, and histidine 25 each coordinate Zn(2+). ATP contacts are provided by alanine 53 and isoleucine 79. The [4Fe-4S] cluster site is built by cysteine 128 and cysteine 131. Cysteine 128 and cysteine 220 are disulfide-bonded. ATP-binding residues include lysine 135 and glycine 154. Cysteine 220 serves as a coordination point for [4Fe-4S] cluster. Zn(2+)-binding residues include cysteine 272, cysteine 275, cysteine 284, and cysteine 287.

The protein belongs to the TtcA family. TtuA subfamily. As to quaternary structure, homodimer. [4Fe-4S] cluster is required as a cofactor. Requires Mg(2+) as cofactor.

It carries out the reaction 5-methyluridine(54) in tRNA + hydrogen sulfide + ATP = 5-methyl-2-thiouridine(54) in tRNA + AMP + diphosphate. Its pathway is tRNA modification. In terms of biological role, catalyzes the ATP-dependent 2-thiolation of 5-methyluridine residue at position 54 in the T loop of tRNAs, leading to 5-methyl-2-thiouridine (m(5)s(2)U or s(2)T). This modification allows thermal stabilization of tRNAs in thermophilic microorganisms, and is required for cell growth at high temperatures. Can use free sulfide as sulfur source in vitro, which may be also the sulfur source in vivo. This is tRNA-5-methyluridine(54) 2-sulfurtransferase from Pyrococcus horikoshii (strain ATCC 700860 / DSM 12428 / JCM 9974 / NBRC 100139 / OT-3).